The chain runs to 344 residues: Holliday junction branch migration complex subunit RuvB (344 aa).

Basic and acidic residues predominate over residues 1-25; sequence MTDSDPTLRPDRLPEDVQATDDRAL. A disordered region spans residues 1–33; the sequence is MTDSDPTLRPDRLPEDVQATDDRALRPQSLDDF. The interval 1–186 is large ATPase domain (RuvB-L); sequence MTDSDPTLRP…FGIPTRLNFY (186 aa). ATP is bound by residues Leu25, Arg26, Gly67, Lys70, Thr71, Thr72, 133-135, Arg176, Tyr186, and Arg223; that span reads EDF. Position 71 (Thr71) interacts with Mg(2+). Positions 187-257 are small ATPAse domain (RuvB-S); the sequence is TIAELDQIVA…IADSALTRLG (71 aa). The tract at residues 260 to 344 is head domain (RuvB-H); that stretch reads DLGLDGADRR…PKRPDQGELI (85 aa). Residues Arg296, Arg315, and Arg320 each contribute to the DNA site.

It belongs to the RuvB family. As to quaternary structure, homohexamer. Forms an RuvA(8)-RuvB(12)-Holliday junction (HJ) complex. HJ DNA is sandwiched between 2 RuvA tetramers; dsDNA enters through RuvA and exits via RuvB. An RuvB hexamer assembles on each DNA strand where it exits the tetramer. Each RuvB hexamer is contacted by two RuvA subunits (via domain III) on 2 adjacent RuvB subunits; this complex drives branch migration. In the full resolvosome a probable DNA-RuvA(4)-RuvB(12)-RuvC(2) complex forms which resolves the HJ.

The protein localises to the cytoplasm. It catalyses the reaction ATP + H2O = ADP + phosphate + H(+). The RuvA-RuvB-RuvC complex processes Holliday junction (HJ) DNA during genetic recombination and DNA repair, while the RuvA-RuvB complex plays an important role in the rescue of blocked DNA replication forks via replication fork reversal (RFR). RuvA specifically binds to HJ cruciform DNA, conferring on it an open structure. The RuvB hexamer acts as an ATP-dependent pump, pulling dsDNA into and through the RuvAB complex. RuvB forms 2 homohexamers on either side of HJ DNA bound by 1 or 2 RuvA tetramers; 4 subunits per hexamer contact DNA at a time. Coordinated motions by a converter formed by DNA-disengaged RuvB subunits stimulates ATP hydrolysis and nucleotide exchange. Immobilization of the converter enables RuvB to convert the ATP-contained energy into a lever motion, pulling 2 nucleotides of DNA out of the RuvA tetramer per ATP hydrolyzed, thus driving DNA branch migration. The RuvB motors rotate together with the DNA substrate, which together with the progressing nucleotide cycle form the mechanistic basis for DNA recombination by continuous HJ branch migration. Branch migration allows RuvC to scan DNA until it finds its consensus sequence, where it cleaves and resolves cruciform DNA. This chain is Holliday junction branch migration complex subunit RuvB, found in Jannaschia sp. (strain CCS1).